We begin with the raw amino-acid sequence, 551 residues long: L-lactate permease (551 aa).

A run of 12 helical transmembrane segments spans residues 13–33 (NIWLSSLIASLPILFFFFALI), 37–57 (LKGYVAASWTVAIALAVALLF), 70–90 (VYGFFYGLWPIAWIIIAAVFV), 131–151 (GAAGFGAPVAITAALLVGLGF), 159–179 (LCLIVNTAPVAFGAMGIPILV), 194–214 (MVGRQLPFMTIIVLFWIMAIM), 244–264 (FIGPELPDIISSLVSLLCLTL), 366–386 (FDWFSATGTAILFAALLSIVW), 405–425 (LALPIYSIGMVLAFAFISNYS), 438–458 (TGHAFTFFSPFLGWLGVFLTG), 494–514 (VTGKMISPQSIAIACAAVGLV), and 530–550 (IFTCMVGVITTLQAYVLTWMI).

This sequence belongs to the lactate permease family.

The protein resides in the cell inner membrane. It carries out the reaction (S)-lactate(in) + H(+)(in) = (S)-lactate(out) + H(+)(out). It catalyses the reaction (R)-lactate(in) + H(+)(in) = (R)-lactate(out) + H(+)(out). The enzyme catalyses glycolate(in) + H(+)(in) = glycolate(out) + H(+)(out). Its function is as follows. Uptake of L-lactate across the membrane. Can also transport D-lactate and glycolate. Seems to be driven by a proton motive force. The protein is L-lactate permease (lldP) of Escherichia coli O6:H1 (strain CFT073 / ATCC 700928 / UPEC).